Consider the following 352-residue polypeptide: RNA 3'-terminal phosphate cyclase (352 aa).

ATP is bound by residues Q102 and 292-296; that span reads HMGDQ. H318 functions as the Tele-AMP-histidine intermediate in the catalytic mechanism.

It belongs to the RNA 3'-terminal cyclase family. Type 1 subfamily.

It localises to the cytoplasm. The enzyme catalyses a 3'-end 3'-phospho-ribonucleotide-RNA + ATP = a 3'-end 2',3'-cyclophospho-ribonucleotide-RNA + AMP + diphosphate. Its function is as follows. Catalyzes the conversion of 3'-phosphate to a 2',3'-cyclic phosphodiester at the end of RNA. The mechanism of action of the enzyme occurs in 3 steps: (A) adenylation of the enzyme by ATP; (B) transfer of adenylate to an RNA-N3'P to produce RNA-N3'PP5'A; (C) and attack of the adjacent 2'-hydroxyl on the 3'-phosphorus in the diester linkage to produce the cyclic end product. The biological role of this enzyme is unknown but it is likely to function in some aspects of cellular RNA processing. The protein is RNA 3'-terminal phosphate cyclase of Methanopyrus kandleri (strain AV19 / DSM 6324 / JCM 9639 / NBRC 100938).